Consider the following 265-residue polypeptide: Hydroxyethylthiazole kinase (265 aa).

M43 contacts substrate. K118 and T165 together coordinate ATP. Substrate is bound at residue G192.

This sequence belongs to the Thz kinase family. Mg(2+) serves as cofactor.

The catalysed reaction is 5-(2-hydroxyethyl)-4-methylthiazole + ATP = 4-methyl-5-(2-phosphooxyethyl)-thiazole + ADP + H(+). It participates in cofactor biosynthesis; thiamine diphosphate biosynthesis; 4-methyl-5-(2-phosphoethyl)-thiazole from 5-(2-hydroxyethyl)-4-methylthiazole: step 1/1. Its function is as follows. Catalyzes the phosphorylation of the hydroxyl group of 4-methyl-5-beta-hydroxyethylthiazole (THZ). In Pyrococcus abyssi (strain GE5 / Orsay), this protein is Hydroxyethylthiazole kinase.